We begin with the raw amino-acid sequence, 149 residues long: Cytochrome c-type biogenesis protein CcmE (149 aa).

Residues 1–7 (MTRKQKR) lie on the Cytoplasmic side of the membrane. Residues 8 to 28 (LAVIAGGMGFIATAVLLVLFA) form a helical; Signal-anchor for type II membrane protein membrane-spanning segment. Over 29–149 (FSQSVAYFYM…GVWKGEEASQ (121 aa)) the chain is Periplasmic. Residues H123 and Y127 each contribute to the heme site.

Belongs to the CcmE/CycJ family.

Its subcellular location is the cell inner membrane. Its function is as follows. Heme chaperone required for the biogenesis of c-type cytochromes. Transiently binds heme delivered by CcmC and transfers the heme to apo-cytochromes in a process facilitated by CcmF and CcmH. The sequence is that of Cytochrome c-type biogenesis protein CcmE from Rhizobium rhizogenes (strain K84 / ATCC BAA-868) (Agrobacterium radiobacter).